Consider the following 125-residue polypeptide: Small ribosomal subunit protein uS13 (125 aa).

Residues 92 to 125 (RRSLPVRGQRTRTNARTRKGKRKTVAGKKKAVKK) are disordered.

Belongs to the universal ribosomal protein uS13 family. Part of the 30S ribosomal subunit. Forms a loose heterodimer with protein S19. Forms two bridges to the 50S subunit in the 70S ribosome.

In terms of biological role, located at the top of the head of the 30S subunit, it contacts several helices of the 16S rRNA. In the 70S ribosome it contacts the 23S rRNA (bridge B1a) and protein L5 of the 50S subunit (bridge B1b), connecting the 2 subunits; these bridges are implicated in subunit movement. Contacts the tRNAs in the A and P-sites. The sequence is that of Small ribosomal subunit protein uS13 from Pelodictyon phaeoclathratiforme (strain DSM 5477 / BU-1).